The chain runs to 498 residues: Elastase (498 aa).

Positions 1 to 23 (MKKVSTLDLLFVAIMGVSPAAFA) are cleaved as a signal peptide. The propeptide occupies 24–197 (ADLIDVSKLP…VLDQWEGLAH (174 aa)). A disulfide bond links Cys227 and Cys255. At Thr236 the chain carries Phosphothreonine. Asp333 contributes to the Ca(2+) binding site. His337 provides a ligand contact to Zn(2+). The active site involves Glu338. His341 and Glu361 together coordinate Zn(2+). The Ca(2+) site is built by Glu369, Glu372, Asp380, and Leu382. His420 (proton donor) is an active-site residue. Cys467 and Cys494 are disulfide-bonded.

The protein belongs to the peptidase M4 family. The cofactor is Ca(2+). Requires Zn(2+) as cofactor. Post-translationally, made as a pre-pro-protein which is exported to the periplasm. Probably autocatalyzes cleavage of its pro-peptide. The pro-peptide can be secreted with mature elastase.

Its subcellular location is the secreted. It catalyses the reaction Hydrolysis of proteins including elastin, collagen types III and IV, fibronectin and immunoglobulin A, generally with bulky hydrophobic group at P1'. Insulin B chain cleavage pattern identical to that of thermolysin, but specificity differs in other respects.. Cleaves host elastase, collagen, IgI and several complement components as well as endogenous pro-aminopeptidase, pro-chitin-binding protein (cbpD). Cleaves its own pro-peptide. Involved in the pathogenesis of P.aeruginosa infections. The chain is Elastase (lasB) from Pseudomonas aeruginosa (strain UCBPP-PA14).